Reading from the N-terminus, the 211-residue chain is Mediator of RNA polymerase II transcription subunit 18 (211 aa).

This sequence belongs to the Mediator complex subunit 18 family. In terms of assembly, component of the Mediator complex.

The protein resides in the nucleus. Functionally, component of the Mediator complex, a coactivator involved in the regulated transcription of nearly all RNA polymerase II-dependent genes. Mediator functions as a bridge to convey information from gene-specific regulatory proteins to the basal RNA polymerase II transcription machinery. Mediator is recruited to promoters by direct interactions with regulatory proteins and serves as a scaffold for the assembly of a functional preinitiation complex with RNA polymerase II and the general transcription factors. This Anopheles gambiae (African malaria mosquito) protein is Mediator of RNA polymerase II transcription subunit 18 (MED18).